The primary structure comprises 249 residues: Leucyl/phenylalanyl-tRNA--protein transferase (249 aa).

A disordered region spans residues methionine 1–glutamate 21.

The protein belongs to the L/F-transferase family.

The protein localises to the cytoplasm. It carries out the reaction N-terminal L-lysyl-[protein] + L-leucyl-tRNA(Leu) = N-terminal L-leucyl-L-lysyl-[protein] + tRNA(Leu) + H(+). The catalysed reaction is N-terminal L-arginyl-[protein] + L-leucyl-tRNA(Leu) = N-terminal L-leucyl-L-arginyl-[protein] + tRNA(Leu) + H(+). It catalyses the reaction L-phenylalanyl-tRNA(Phe) + an N-terminal L-alpha-aminoacyl-[protein] = an N-terminal L-phenylalanyl-L-alpha-aminoacyl-[protein] + tRNA(Phe). In terms of biological role, functions in the N-end rule pathway of protein degradation where it conjugates Leu, Phe and, less efficiently, Met from aminoacyl-tRNAs to the N-termini of proteins containing an N-terminal arginine or lysine. The chain is Leucyl/phenylalanyl-tRNA--protein transferase from Xanthomonas campestris pv. campestris (strain B100).